A 928-amino-acid polypeptide reads, in one-letter code: Retinoblastoma-associated protein (928 aa).

Positions Met1–Leu42 are disordered. Pro2 bears the N,N-dimethylproline mark. Residues Lys8 to Glu19 show a composition bias toward low complexity. The span at Pro29–Pro39 shows a compositional bias: acidic residues. Ser37 is subject to Phosphoserine. Ser249 carries the post-translational modification Phosphoserine; by CDK1. Thr252 is modified (phosphothreonine; by CDK1). Thr356 carries the phosphothreonine modification. A Phosphothreonine; by CDK1 modification is found at Thr373. Positions Thr373 to Arg579 are domain A. The pocket; binds T and E1A stretch occupies residues Thr373–Tyr771. A Phosphoserine; by CDK2 modification is found at Ser567. The segment at Glu580–Gln639 is spacer. Position 608 is a phosphoserine (Ser608). Positions Val610 to Ala632 are disordered. Ser612 carries the phosphoserine; by CHEK2 and CHEK1 modification. Over residues Thr619–Ala632 the composition is skewed to polar residues. Residue Ser624 is modified to Phosphoserine. Residues Lys640–Tyr771 form a domain B region. The interval Arg763–Lys928 is interaction with LIMD1. Residues Tyr771–Lys928 are domain C; mediates interaction with E4F1. A phosphoserine mark is found at Ser780, Ser788, and Ser795. Position 807 is a phosphoserine; by CDK1 and CDK3 (Ser807). Position 810 is an N6-methyllysine; by SMYD2 (Lys810). Ser811 is modified (phosphoserine; by CDK1 and CDK3). Position 821 is a phosphothreonine; by CDK6 (Thr821). Thr823 bears the Phosphothreonine mark. Thr826 is modified (phosphothreonine; by CDK4). Thr841 carries the post-translational modification Phosphothreonine. Ser855 is subject to Phosphoserine. Lys860 carries the N6-methyllysine; by SMYD2 modification. Residues Lys860–Arg876 carry the Bipartite nuclear localization signal motif. Residues Lys860–Lys928 form a disordered region. N6-acetyllysine; by PCAF is present on residues Lys873 and Lys874. The span at Lys915 to Lys928 shows a compositional bias: basic and acidic residues.

Belongs to the retinoblastoma protein (RB) family. In terms of assembly, the hypophosphorylated form interacts with and sequesters the E2F1 transcription factor, thereby inhibiting E2F1 transcription. Interacts with heterodimeric E2F/DP transcription factor complexes containing TFDP1 and either E2F1, E2F3, E2F4 or E2F5, or TFDP2 and E2F4. Interacts (when hyperphosphorylated and hypophosphorylated) with PKP3; the interaction inhibits RB1 interaction with and repression of the transcription factor E2F1, potentially via sequestering RB1 to the cytoplasm. The unphosphorylated form interacts with EID1, ARID3B, KDM5A, SUV39H1, MJD2A/JHDM3A and THOC1. Interacts with the N-terminal domain of TAF1. Interacts with SNW1, ATAD5, AATF, DNMT1, LIN9, LMNA, KMT5B, KMT5C, PELP1, UHRF2 and TMPO-alpha. Interacts with GRIP1 and UBR4. Interacts with ARID4A and KDM5B. Interacts with E4F1 and LIMD1. Interacts with SMARCA4/BRG1 and HDAC1. Interacts with PSMA3 and USP4. Interacts (when methylated at Lys-860) with L3MBTL1. Interacts with CHEK2; phosphorylates RB1. Interacts with CDK1 and CDK2. Interacts with PRMT2. Interacts with CEBPA. P-TEFB complex interacts with RB1; promotes phosphorylation of RB1. Interacts with RBBP9; the interaction disrupts RB1 binding to E2F1. Interacts with KAT2B/PCAF and EP300/P300. Interacts with PAX5. Interacts (phosphorylated and unphosphorylated) with BLCAP. May interact with NDC80. As to quaternary structure, (Microbial infection) Interacts with adenovirus E1A protein. (Microbial infection) Interacts with HPV E7 protein. In terms of assembly, (Microbial infection) Interacts with SV40 large T antigen. As to quaternary structure, (Microbial infection) Interacts with human cytomegalovirus/HHV-5 proteins UL82 and UL123. (Microbial infection) Interacts with molluscum contagiosum virus protein MC007. Phosphorylated by CDK6 and CDK4, and subsequently by CDK2 at Ser-567 in G1, thereby releasing E2F1 which is then able to activate cell growth. Dephosphorylated at the late M phase. SV40 large T antigen, HPV E7 and adenovirus E1A bind to the underphosphorylated, active form of pRb. Phosphorylation at Thr-821 and Thr-826 promotes interaction between the C-terminal domain C and the Pocket domain, and thereby inhibits interactions with heterodimeric E2F/DP transcription factor complexes. Dephosphorylated at Ser-795 by calcineruin upon calcium stimulation. CDK3/cyclin-C-mediated phosphorylation at Ser-807 and Ser-811 is required for G0-G1 transition. Phosphorylated by CDK1 and CDK2 upon TGFB1-mediated apoptosis. Post-translationally, N-terminus is methylated by METTL11A/NTM1. Monomethylation at Lys-810 by SMYD2 enhances phosphorylation at Ser-807 and Ser-811, and promotes cell cycle progression. Monomethylation at Lys-860 by SMYD2 promotes interaction with L3MBTL1. In terms of processing, acetylated during keratinocyte differentiation. Acetylation at Lys-873 and Lys-874 regulates subcellular localization. Can be deacetylated by SIRT1. As to expression, expressed in the retina. Expressed in foreskin keratinocytes (at protein level).

It localises to the nucleus. The protein localises to the cytoplasm. In terms of biological role, tumor suppressor that is a key regulator of the G1/S transition of the cell cycle. The hypophosphorylated form binds transcription regulators of the E2F family, preventing transcription of E2F-responsive genes. Both physically blocks E2Fs transactivating domain and recruits chromatin-modifying enzymes that actively repress transcription. Cyclin and CDK-dependent phosphorylation of RB1 induces its dissociation from E2Fs, thereby activating transcription of E2F responsive genes and triggering entry into S phase. RB1 also promotes the G0-G1 transition upon phosphorylation and activation by CDK3/cyclin-C. Directly involved in heterochromatin formation by maintaining overall chromatin structure and, in particular, that of constitutive heterochromatin by stabilizing histone methylation. Recruits and targets histone methyltransferases SUV39H1, KMT5B and KMT5C, leading to epigenetic transcriptional repression. Controls histone H4 'Lys-20' trimethylation. Inhibits the intrinsic kinase activity of TAF1. Mediates transcriptional repression by SMARCA4/BRG1 by recruiting a histone deacetylase (HDAC) complex to the c-FOS promoter. In resting neurons, transcription of the c-FOS promoter is inhibited by BRG1-dependent recruitment of a phospho-RB1-HDAC1 repressor complex. Upon calcium influx, RB1 is dephosphorylated by calcineurin, which leads to release of the repressor complex. Its function is as follows. (Microbial infection) In case of viral infections, interactions with SV40 large T antigen, HPV E7 protein or adenovirus E1A protein induce the disassembly of RB1-E2F1 complex thereby disrupting RB1's activity. In Homo sapiens (Human), this protein is Retinoblastoma-associated protein (RB1).